A 293-amino-acid polypeptide reads, in one-letter code: Homoserine kinase (293 aa).

84 to 94 (PLSRGLGSSSA) serves as a coordination point for ATP.

This sequence belongs to the GHMP kinase family. Homoserine kinase subfamily.

The protein resides in the cytoplasm. It carries out the reaction L-homoserine + ATP = O-phospho-L-homoserine + ADP + H(+). The protein operates within amino-acid biosynthesis; L-threonine biosynthesis; L-threonine from L-aspartate: step 4/5. Functionally, catalyzes the ATP-dependent phosphorylation of L-homoserine to L-homoserine phosphate. The protein is Homoserine kinase of Nautilia profundicola (strain ATCC BAA-1463 / DSM 18972 / AmH).